The chain runs to 529 residues: Polygalacturonase (529 aa).

Positions 1–21 (MNHRYTLLALAAAALSAGAHA) are cleaved as a signal peptide. The active-site Proton donor is Asp-305. His-331 is an active-site residue. Positions 516–529 (AFVPLKSVAPTSPI) are required for PGA export across the outer membrane and catalytic activity.

It belongs to the glycosyl hydrolase 28 family. As to quaternary structure, monomer.

The protein localises to the secreted. It catalyses the reaction (1,4-alpha-D-galacturonosyl)n+m + H2O = (1,4-alpha-D-galacturonosyl)n + (1,4-alpha-D-galacturonosyl)m.. Its function is as follows. Contributes to the wilt disease production on tomato. This Ralstonia solanacearum (Pseudomonas solanacearum) protein is Polygalacturonase (pglA).